The primary structure comprises 471 residues: Alpha-galactosidase (471 aa).

Positions 1–18 (MSYIYLFITAAAVTGALG) are cleaved as a signal peptide. A disulfide bridge connects residues cysteine 42 and cysteine 74. Aspartate 72 and aspartate 73 together coordinate substrate. N-linked (GlcNAc...) asparagine glycosylation occurs at asparagine 82. Cysteine 121 and cysteine 151 are joined by a disulfide. Lysine 147 lines the substrate pocket. Aspartate 149 acts as the Nucleophile in catalysis. Residue asparagine 175 is glycosylated (N-linked (GlcNAc...) asparagine). Arginine 205 lines the substrate pocket. Aspartate 209 functions as the Proton donor in the catalytic mechanism. 2 cysteine pairs are disulfide-bonded: cysteine 221/cysteine 237 and cysteine 223/cysteine 230. Glutamine 251 is a substrate binding site. N-linked (GlcNAc...) asparagine glycosylation is found at asparagine 270, asparagine 361, asparagine 370, asparagine 417, asparagine 422, asparagine 435, and asparagine 454.

Belongs to the glycosyl hydrolase 27 family. In terms of assembly, homotetramer.

It localises to the secreted. It catalyses the reaction Hydrolysis of terminal, non-reducing alpha-D-galactose residues in alpha-D-galactosides, including galactose oligosaccharides, galactomannans and galactolipids.. The polypeptide is Alpha-galactosidase (MEL) (Saccharomyces mikatae (Yeast)).